A 183-amino-acid polypeptide reads, in one-letter code: GMP synthase [glutamine-hydrolyzing] subunit A (183 aa).

In terms of domain architecture, Glutamine amidotransferase type-1 spans 2–183; it reads KIYVIYNYGQ…YRNFIEICKK (182 aa). Cys-74 acts as the Nucleophile in catalysis. Active-site residues include His-161 and Glu-163.

Heterodimer composed of a glutamine amidotransferase subunit (A) and a GMP-binding subunit (B).

It catalyses the reaction XMP + L-glutamine + ATP + H2O = GMP + L-glutamate + AMP + diphosphate + 2 H(+). It participates in purine metabolism; GMP biosynthesis; GMP from XMP (L-Gln route): step 1/1. Functionally, catalyzes the synthesis of GMP from XMP. The sequence is that of GMP synthase [glutamine-hydrolyzing] subunit A from Archaeoglobus fulgidus (strain ATCC 49558 / DSM 4304 / JCM 9628 / NBRC 100126 / VC-16).